A 37-amino-acid polypeptide reads, in one-letter code: Large ribosomal subunit protein bL36 (37 aa).

Belongs to the bacterial ribosomal protein bL36 family.

In Halothermothrix orenii (strain H 168 / OCM 544 / DSM 9562), this protein is Large ribosomal subunit protein bL36.